Consider the following 153-residue polypeptide: Transcriptional repressor NrdR (153 aa).

Residues 3–34 (CPFCNNINTQVKDSRAIEDDILIRRRRICLVC) fold into a zinc finger. The 91-residue stretch at 49-139 (FMVIKKNGET…VYMNFKNIND (91 aa)) folds into the ATP-cone domain.

Belongs to the NrdR family. Zn(2+) serves as cofactor.

Negatively regulates transcription of bacterial ribonucleotide reductase nrd genes and operons by binding to NrdR-boxes. The polypeptide is Transcriptional repressor NrdR (Ehrlichia canis (strain Jake)).